A 633-amino-acid polypeptide reads, in one-letter code: Basic helix-loop-helix ARNT-like protein 1 (633 aa).

Positions 1 to 65 (MADQRMDISS…GMDTDKDDQH (65 aa)) are disordered. Ser17 carries the post-translational modification Phosphoserine; by GSK3-beta. Residues 24–33 (ISSSLSTSGV) are compositionally biased toward polar residues. A Nuclear localization signal motif is present at residues 36–41 (NRKRKG). Positions 79–132 (NAREAHSQIEKRRRDKMNSFIDELASLVPTCNAMSRKLDKLTVLRMAVQHMKTL) constitute a bHLH domain. Residue Ser85 is modified to Phosphoserine. The residue at position 97 (Ser97) is a Phosphoserine; by CK2. The short motif at 149 to 159 (LSDDELKHLIL) is the Nuclear export signal 1 element. The PAS 1 domain occupies 150–222 (SDDELKHLIL…EQLSSSDTAP (73 aa)). Lys259 is covalently cross-linked (Glycyl lysine isopeptide (Lys-Gly) (interchain with G-Cter in SUMO2 and SUMO3)). Lys266 is covalently cross-linked (Glycyl lysine isopeptide (Lys-Gly) (interchain with G-Cter in SUMO)). Positions 333-403 (PQPVNGEIRV…ECHRQVLQTR (71 aa)) constitute a PAS 2 domain. The short motif at 368 to 376 (LAYLPQELL) is the Nuclear export signal 2 element. The 44-residue stretch at 408 to 451 (TNCYKFKIKDGSFITLRSRWFSFMNPWTKEVEYIVSTNTVVSTS) folds into the PAC domain. Disordered regions lie at residues 469–499 (SMDS…RAGA) and 518–578 (GSSP…DNSS). The segment covering 518–528 (GSSPSSCGSSP) has biased composition (low complexity). Lys545 is subject to N6-acetyllysine. The segment covering 563–578 (GQIQDSSGYPYSDNSS) has biased composition (polar residues).

Component of the circadian clock oscillator which includes the CRY1/2 proteins, CLOCK or NPAS2, BMAL1 or BMAL2, CSNK1D and/or CSNK1E, TIMELESS and the PER1/2/3 proteins. Forms a heterodimer with CLOCK. The CLOCK-BMAL1 heterodimer is required for E-box-dependent transactivation, for CLOCK nuclear translocation and degradation, and, for phosphorylation of both CLOCK and BMAL1. Interacts with PER1, PER2, CRY1 and CRY2 and this interaction requires a translocation to the nucleus. Interaction of the CLOCK-BMAL1 heterodimer with PER or CRY inhibits transcription activation. Interacts with NPAS2. In terms of processing, ubiquitinated, leading to its proteasomal degradation. Deubiquitinated by USP9X. Post-translationally, O-glycosylated; contains O-GlcNAc. O-glycosylation by OGT prevents protein degradation by inhibiting ubiquitination. It also stabilizes the CLOCK-BMAL1 heterodimer thereby increasing CLOCK-BMAL1-mediated transcription of genes in the negative loop of the circadian clock such as PER1/2/3 and CRY1/2. Acetylated on Lys-545 by CLOCK during the repression phase of the circadian cycle. Acetylation facilitates recruitment of CRY1 protein and initiates the repression phase of the circadian cycle. Acetylated at Lys-545 by KAT5 during the activation phase of the cycle, leading to recruitment of the positive transcription elongation factor b (P-TEFb) and BRD4, followed by productive elongation of circadian transcripts. Deacetylated by SIRT1, which may result in decreased protein stability. In terms of processing, phosphorylated upon dimerization with CLOCK. Phosphorylation enhances the transcriptional activity, alters the subcellular localization and decreases the stability of the CLOCK-BMAL1 heterodimer by promoting its degradation. Phosphorylation shows circadian variations in the liver with a peak between CT10 to CT14. Phosphorylation at Ser-97 by CK2 is essential for its nuclear localization, its interaction with CLOCK and controls CLOCK nuclear entry. Dephosphorylation at Ser-85 is important for dimerization with CLOCK and transcriptional activity. Post-translationally, sumoylated on Lys-266 upon dimerization with CLOCK. Predominantly conjugated to poly-SUMO2/3 rather than SUMO1 and the level of these conjugates undergo rhythmic variation, peaking at CT9-CT12. Sumoylation localizes it exclusively to the PML body and promotes its ubiquitination in the PML body, ubiquitin-dependent proteasomal degradation and the transcriptional activity of the CLOCK-BMAL1 heterodimer. Undergoes lysosome-mediated degradation in a time-dependent manner in the liver. As to expression, expressed in pineal gland and retina.

The protein resides in the nucleus. The protein localises to the cytoplasm. It is found in the PML body. In terms of biological role, transcriptional activator which forms a core component of the circadian clock. The circadian clock, an internal time-keeping system, regulates various physiological processes through the generation of approximately 24 hour circadian rhythms in gene expression, which are translated into rhythms in metabolism and behavior. It is derived from the Latin roots 'circa' (about) and 'diem' (day) and acts as an important regulator of a wide array of physiological functions including metabolism, sleep, body temperature, blood pressure, endocrine, immune, cardiovascular, and renal function. Consists of two major components: the central clock, residing in the suprachiasmatic nucleus (SCN) of the brain, and the peripheral clocks that are present in nearly every tissue and organ system. Both the central and peripheral clocks can be reset by environmental cues, also known as Zeitgebers (German for 'timegivers'). The predominant Zeitgeber for the central clock is light, which is sensed by retina and signals directly to the SCN. The central clock entrains the peripheral clocks through neuronal and hormonal signals, body temperature and feeding-related cues, aligning all clocks with the external light/dark cycle. Circadian rhythms allow an organism to achieve temporal homeostasis with its environment at the molecular level by regulating gene expression to create a peak of protein expression once every 24 hours to control when a particular physiological process is most active with respect to the solar day. Transcription and translation of core clock components (CLOCK, NPAS2, BMAL1, BMAL2, PER1, PER2, PER3, CRY1 and CRY2) plays a critical role in rhythm generation, whereas delays imposed by post-translational modifications (PTMs) are important for determining the period (tau) of the rhythms (tau refers to the period of a rhythm and is the length, in time, of one complete cycle). A diurnal rhythm is synchronized with the day/night cycle, while the ultradian and infradian rhythms have a period shorter and longer than 24 hours, respectively. Disruptions in the circadian rhythms contribute to the pathology of cardiovascular diseases, cancer, metabolic syndromes and aging. A transcription/translation feedback loop (TTFL) forms the core of the molecular circadian clock mechanism. Transcription factors, CLOCK or NPAS2 and BMAL1 or BMAL2, form the positive limb of the feedback loop, act in the form of a heterodimer and activate the transcription of core clock genes and clock-controlled genes (involved in key metabolic processes), harboring E-box elements (5'-CACGTG-3') within their promoters. The core clock genes: PER1/2/3 and CRY1/2 which are transcriptional repressors form the negative limb of the feedback loop and interact with the CLOCK|NPAS2-BMAL1|BMAL2 heterodimer inhibiting its activity and thereby negatively regulating their own expression. This heterodimer also activates nuclear receptors NR1D1/2 and RORA/B/G, which form a second feedback loop and which activate and repress BMAL1 transcription, respectively. The preferred binding motif for the CLOCK-BMAL1 heterodimer is 5'-CACGTGA-3', which contains a flanking adenine nucleotide at the 3-prime end of the canonical 6-nucleotide E-box sequence. CLOCK specifically binds to the half-site 5'-CAC-3', while BMAL1 binds to the half-site 5'-GTGA-3'. Essential for the rhythmic interaction of CLOCK with ASS1 and plays a critical role in positively regulating CLOCK-mediated acetylation of ASS1. Plays a role in protecting against lethal sepsis by limiting the expression of immune checkpoint protein CD274 in macrophages in a PKM2-dependent manner. This chain is Basic helix-loop-helix ARNT-like protein 1 (BMAL1), found in Gallus gallus (Chicken).